A 363-amino-acid polypeptide reads, in one-letter code: Protein-arginine kinase (363 aa).

Residues 24–255 (IVLSSRIRLA…EQLIAQERAA (232 aa)) form the Phosphagen kinase C-terminal domain. ATP is bound by residues 27 to 31 (SSRIR), His-92, Arg-126, 177 to 181 (RASVM), and 208 to 213 (RGTYGE). The RDXXRA motif of the pArg binding pocket involved in allosteric regulation signature appears at 338 to 343 (RDVRRA).

The protein belongs to the ATP:guanido phosphotransferase family. As to quaternary structure, homodimer. Dimerization is important for full catalytic activity.

It catalyses the reaction L-arginyl-[protein] + ATP = N(omega)-phospho-L-arginyl-[protein] + ADP + H(+). Appears to be allosterically activated by the binding of pArg-containing polypeptides to the pArg-binding pocket localized in the C-terminal domain of McsB. In terms of biological role, catalyzes the specific phosphorylation of arginine residues in a large number of proteins. Is part of the bacterial stress response system, where it is involved in regulating the global heat shock repressor CtsR; phosphorylates arginine residues in the winged helix-turn-helix domain of CtsR, thereby preventing its binding to DNA and consequently inducing the expression of repressed genes. Protein arginine phosphorylation has a physiologically important role and is involved in the regulation of many critical cellular processes, such as protein homeostasis, motility, competence, and stringent and stress responses, by regulating gene expression and protein activity. Acts exclusively on Arg residues, since it cannot phosphorylate Tyr, Ser, Thr, His, Asp and Lys. Has no free arginine kinase activity. The sequence is that of Protein-arginine kinase from Geobacillus stearothermophilus (Bacillus stearothermophilus).